We begin with the raw amino-acid sequence, 136 residues long: Pilotin AspS 2 (136 aa).

A signal peptide spans 1 to 24; it reads MSIKQMPGRVLISLLLSVTGLLSG. Cys-25 carries the N-palmitoyl cysteine lipid modification. Cys-25 carries S-diacylglycerol cysteine lipidation. The cysteines at positions 94 and 131 are disulfide-linked.

This sequence belongs to the GspS/AspS pilotin family. In terms of assembly, cryo-electron microscopy shows that the complex forms a cylindrical channel with 15 GspD2 subunits, each of which interacts with its surrounding AspS2 (GspS-beta).

It is found in the cell outer membrane. Functionally, part of a type II secretion system (T2SS, formerly general secretion pathway, GSP) for the export of folded proteins across the outer membrane. Required for correct assembly of the type II secretion system-beta (T2SS-beta), for localization of GspD-beta to the cell outer membrane and for export of a labile enterotoxin by T2SS-beta. Each AspS2 binds to 2 GspD2 subunits and may clamp the monomers together, stabilizing structure and accelerating its assembly. This Escherichia coli O78:H11 (strain H10407 / ETEC) protein is Pilotin AspS 2.